Reading from the N-terminus, the 232-residue chain is Ribosome maturation protein SDO1 homolog (232 aa).

The protein belongs to the SDO1/SBDS family.

The protein is Ribosome maturation protein SDO1 homolog of Methanothermobacter thermautotrophicus (strain ATCC 29096 / DSM 1053 / JCM 10044 / NBRC 100330 / Delta H) (Methanobacterium thermoautotrophicum).